Here is a 323-residue protein sequence, read N- to C-terminus: Acetyl esterase (323 aa).

Positions 91-93 (HGG) match the Involved in the stabilization of the negatively charged intermediate by the formation of the oxyanion hole motif. Residues Ser-165, Asp-262, and His-292 contribute to the active site.

This sequence belongs to the 'GDXG' lipolytic enzyme family. In terms of assembly, homodimer. Interacts with MalT and MelA.

It localises to the cytoplasm. Displays esterase activity towards short chain fatty esters (acyl chain length of up to 8 carbons). Able to hydrolyze triacetylglycerol (triacetin) and tributyrylglycerol (tributyrin), but not trioleylglycerol (triolein) or cholesterol oleate. Negatively regulates MalT activity by antagonizing maltotriose binding. Inhibits MelA galactosidase activity. The chain is Acetyl esterase from Salmonella choleraesuis (strain SC-B67).